We begin with the raw amino-acid sequence, 167 residues long: 18.8 kDa class II heat shock protein (167 aa).

A sHSP domain is found at 49-167 (DAKAMAATPA…KPKTVEVKVA (119 aa)).

Belongs to the small heat shock protein (HSP20) family.

It localises to the cytoplasm. The protein is 18.8 kDa class II heat shock protein (SHSP-2) of Ipomoea nil (Japanese morning glory).